The sequence spans 360 residues: Phospho-N-acetylmuramoyl-pentapeptide-transferase (360 aa).

The next 10 membrane-spanning stretches (helical) occupy residues 26 to 46 (AILA…KLIE), 74 to 94 (MGGL…GDLG), 97 to 117 (YVWV…IDDY), 132 to 152 (WKYI…FYST), 168 to 188 (ILPQ…VGAS), 199 to 219 (GLAI…AYLS), 236 to 256 (SGEL…FLWF), 263 to 283 (VFMG…IAVL), 288 to 308 (ILLV…ILQV), and 338 to 358 (VIVR…ATLK).

It belongs to the glycosyltransferase 4 family. MraY subfamily. It depends on Mg(2+) as a cofactor.

The protein resides in the cell inner membrane. It carries out the reaction UDP-N-acetyl-alpha-D-muramoyl-L-alanyl-gamma-D-glutamyl-meso-2,6-diaminopimeloyl-D-alanyl-D-alanine + di-trans,octa-cis-undecaprenyl phosphate = di-trans,octa-cis-undecaprenyl diphospho-N-acetyl-alpha-D-muramoyl-L-alanyl-D-glutamyl-meso-2,6-diaminopimeloyl-D-alanyl-D-alanine + UMP. The protein operates within cell wall biogenesis; peptidoglycan biosynthesis. In terms of biological role, catalyzes the initial step of the lipid cycle reactions in the biosynthesis of the cell wall peptidoglycan: transfers peptidoglycan precursor phospho-MurNAc-pentapeptide from UDP-MurNAc-pentapeptide onto the lipid carrier undecaprenyl phosphate, yielding undecaprenyl-pyrophosphoryl-MurNAc-pentapeptide, known as lipid I. This is Phospho-N-acetylmuramoyl-pentapeptide-transferase from Shewanella amazonensis (strain ATCC BAA-1098 / SB2B).